A 137-amino-acid chain; its full sequence is MTTLTKNSKIIYAGTGRRKTSIARVKLVPGSGKLIINGLPGESYLQFSPNYLRVSYSPLKILGLNKEYDIYVKTEGGGLTGQANAIRLGLARALCRMNPDNRTTLKAEGFLTRDARIKERKKYGLRKARKAPQYSKR.

Belongs to the universal ribosomal protein uS9 family.

Its subcellular location is the plastid. The protein localises to the chloroplast. This is Small ribosomal subunit protein uS9c (rps9) from Gracilaria tenuistipitata var. liui (Red alga).